Consider the following 1203-residue polypeptide: Cation-transporting ATPase catp-5 (1203 aa).

Topologically, residues 1–68 are cytoplasmic; it reads MNTSEREPLL…YAYKETIGRQ (68 aa). The tract at residues 21–42 is disordered; sequence TTDNPSTKIMKREKDNPKAKTT. Residues 69-89 form a helical membrane-spanning segment; that stretch reads ILFWLLTIVTLGFYQLLAYWV. At 90–209 the chain is on the extracellular side; the sequence is KSLFVKVRFQ…RKIYNMNALA (120 aa). Residues 210-230 form a helical membrane-spanning segment; the sequence is LALTPILVILFKEVLGPFYLF. The Cytoplasmic segment spans residues 231–242; the sequence is QCFSVALWYSDN. The helical transmembrane segment at 243–263 threads the bilayer; the sequence is YAYYASVIVIITVGSAAVAVY. Residues 264–297 lie on the Extracellular side of the membrane; that stretch reads QMRAQEKRIRNMVGDTISVIVRRDGHDITIDASE. Residues 298–318 form a helical membrane-spanning segment; sequence IVPMDILILPSNTFILPCDCL. Over 319–414 the chain is Cytoplasmic; it reads LMNGTVIVNE…KPQEKEALKD (96 aa). Residues 415 to 435 traverse the membrane as a helical segment; sequence VMVFILVLGFIALIGFIYTVI. The Extracellular segment spans residues 436–451; sequence EMVSRGESLKHIIIRS. The helical transmembrane segment at 452–472 threads the bilayer; that stretch reads LDIITIVVPPALPAAMSVGII. Topologically, residues 473–935 are cytoplasmic; that stretch reads NANSRLKKKK…KEGRCALVTS (463 aa). Catalysis depends on Asp-503, which acts as the 4-aspartylphosphate intermediate. The segment at 595–617 is disordered; it reads ETQDFDTVQPTVLRPPPEQATYH. Residues Asp-883 and Asp-887 each coordinate Mg(2+). Residues 936–956 form a helical membrane-spanning segment; sequence YAVSKYMAAYSLNEFLSVMLL. Residues 957-962 are Extracellular-facing; the sequence is YNDGTN. A helical transmembrane segment spans residues 963–983; sequence ISDGQFLYIDLVLITLVALFL. Over 984-1007 the chain is Cytoplasmic; that stretch reads GNTEASRKLSGIPPPRRLATSAFY. The chain crosses the membrane as a helical span at residues 1008-1028; sequence FSVFGQMFFNIITQTTGYLLV. Residues 1029 to 1046 lie on the Extracellular side of the membrane; sequence RGQSWYVPNPEELDNTTT. A helical membrane pass occupies residues 1047 to 1067; it reads MIGTTVFFTSCCMYLGYAFVY. Topologically, residues 1068 to 1085 are cytoplasmic; it reads SKGHPYRRSVFTNWLLCG. A helical membrane pass occupies residues 1086 to 1106; it reads IIFVIGAINMVMIFTNMGFLM. Residues 1107 to 1120 are Extracellular-facing; it reads NLMGFVYVPSTSMR. The helical transmembrane segment at 1121-1141 threads the bilayer; that stretch reads FILLAISLAGVFLSLLYEHFF. Over 1142–1203 the chain is Cytoplasmic; the sequence is VEKVVAIHFE…DRKETIESKC (62 aa).

This sequence belongs to the cation transport ATPase (P-type) (TC 3.A.3) family. Type V subfamily. As to expression, expressed in the 20 intestinal cells and in the excretory cell.

Its subcellular location is the apical cell membrane. The enzyme catalyses ATP + H2O = ADP + phosphate + H(+). Its function is as follows. Involved in the uptake and/or transport of polyamines, probably through ATP hydrolysis. This contributes to the maintenance of intracellular polyamine levels. Polyamines are essential for cell proliferation and are implicated in cellular processes, ranging from DNA replication to apoptosis. This chain is Cation-transporting ATPase catp-5, found in Caenorhabditis elegans.